A 97-amino-acid chain; its full sequence is DNA-directed RNA polymerase subunit omega (97 aa).

This sequence belongs to the RNA polymerase subunit omega family. In terms of assembly, the RNAP catalytic core consists of 2 alpha, 1 beta, 1 beta' and 1 omega subunit. When a sigma factor is associated with the core the holoenzyme is formed, which can initiate transcription.

It catalyses the reaction RNA(n) + a ribonucleoside 5'-triphosphate = RNA(n+1) + diphosphate. Its function is as follows. Promotes RNA polymerase assembly. Latches the N- and C-terminal regions of the beta' subunit thereby facilitating its interaction with the beta and alpha subunits. This chain is DNA-directed RNA polymerase subunit omega, found in Coxiella burnetii (strain Dugway 5J108-111).